Consider the following 229-residue polypeptide: MAALGHLAGEAAAVPGLGTPCASRRHRLSGPVSSAGNPSTVCLCPGQPTCSNADSRAHPLGDEGGTASKKQNKKKKTRNRASVANGGEKASEKLAPEEVPLSAEAQTQQLAQELAWCVEQLELGLKRQKPNPKQKEQAIGAIRTLRSKRTPLPRKRQLMHSLFGDYRAQMEAEWREALRALRAAAYSAQVQPVDGATRKKSQRVCRPRPIWRAKATLDLPDEEFKFNFF.

Position 2 is an N-acetylalanine (Ala-2). Arg-27 is modified (omega-N-methylarginine). Residues 55–101 form a disordered region; sequence SRAHPLGDEGGTASKKQNKKKKTRNRASVANGGEKASEKLAPEEVPL. The segment covering 70–79 has biased composition (basic residues); the sequence is KQNKKKKTRN. A Phosphoserine modification is found at Ser-82.

The protein belongs to the UPF0488 family.

The chain is UPF0488 protein C8orf33 homolog from Pongo abelii (Sumatran orangutan).